We begin with the raw amino-acid sequence, 85 residues long: uncharacterized protein (85 aa).

An N-terminal signal peptide occupies residues 1–20 (MIKLFCVLAAFISINSACQS).

This is an uncharacterized protein from Invertebrate iridescent virus 6 (IIV-6).